The sequence spans 261 residues: UPF0246 protein Rmet_0978 (261 aa).

It belongs to the UPF0246 family.

This chain is UPF0246 protein Rmet_0978, found in Cupriavidus metallidurans (strain ATCC 43123 / DSM 2839 / NBRC 102507 / CH34) (Ralstonia metallidurans).